The chain runs to 402 residues: MTILKASQVKLTARRTGLARLDPSPTGTLELANELLQRNHDSYHMYFRDVGGHNHIAHSVLSVLAMGGGPKELNRAYDDGYGYQRPLPALNFLHFFESEIDAKGWQAVLQEYCFSRTPLAEAMFSQLYEGLLHPIIHLGFGIEFEQPSIIAEGLAHAASHDPGNIDTFFLRSEELARSGSVPAKPLVELYEEVRRNEKTRTAGRMQDGPFRLRDGPLARSMDEIVHIAAQFQIKPEDLERGTAEMINCAAYSAGRRSGPASVLVKQSWIKLEDRIRLVEWKARLDLAWYAANGAAELRLEDISGYEPTASKGMEWHALYKAVNEVHDDGHIAKFVRALKNGETVSAPFEQGDGADAFPIKGDLWLRIAQMGYDTTKDGHDNSDKWVWGAGFDLAWMKVPDSQ.

This sequence belongs to the questin oxidase family.

Its function is as follows. Baeyer-Villiger oxidase; part of the gene cluster that mediates the biosynthesis of notoamide, a fungal indole alkaloid that belongs to a family of natural products containing a characteristic bicyclo[2.2.2]diazaoctane core. The first step of notoamide biosynthesis involves coupling of L-proline and L-tryptophan by the bimodular NRPS notE, to produce cyclo-L-tryptophan-L-proline called brevianamide F. The reverse prenyltransferase notF then acts as a deoxybrevianamide E synthase and converts brevianamide F to deoxybrevianamide E via reverse prenylation at C-2 of the indole ring leading to the bicyclo[2.2.2]diazaoctane core. Deoxybrevianamide E is further hydroxylated at C-6 of the indole ring, likely catalyzed by the cytochrome P450 monooxygenase notG, to yield 6-hydroxy-deoxybrevianamide E. 6-hydroxy-deoxybrevianamide E is a specific substrate of the prenyltransferase notC for normal prenylation at C-7 to produce 6-hydroxy-7-prenyl-deoxybrevianamide, also called notoamide S. As the proposed pivotal branching point in notoamide biosynthesis, notoamide S can be diverted to notoamide E through an oxidative pyran ring closure putatively catalyzed by either notH cytochrome P450 monooxygenase or the notD FAD-linked oxidoreductase. This step would be followed by an indole 2,3-epoxidation-initiated pinacol-like rearrangement catalyzed by the notB FAD-dependent monooxygenase leading to the formation of notoamide C and notoamide D. On the other hand notoamide S is converted to notoamide T by notH (or notD), a bifunctional oxidase that also functions as the intramolecular Diels-Alderase responsible for generation of (+)-notoamide T. To generate antipodal (-)-notoaminide T, notH' (or notD') in Aspergillus versicolor is expected to catalyze a Diels-Alder reaction leading to the opposite stereochemistry. The remaining oxidoreductase notD (or notH) likely catalyzes the oxidative pyran ring formation to yield (+)-stephacidin A. The FAD-dependent monooxygenase notI is highly similar to notB and is predicted to catalyze a similar conversion from (+)-stephacidin A to (-)-notoamide B via the 2,3-epoxidation of (+)-stephacidin A followed by a pinacol-type rearrangement. Finally, it remains unclear which enzyme could be responsible for the final hydroxylation steps leading to notoamide A and sclerotiamide. The function of notM in the notoamide biosynthesis has not been determined yet. This Aspergillus sp. (strain MF297-2) protein is Baeyer-Villiger oxidase notM.